A 209-amino-acid polypeptide reads, in one-letter code: Large ribosomal subunit protein uL3 (209 aa).

The tract at residues 126–165 (HNFGGGSRTHGQSDRLRAPGSVGGSSDPSRTFRGTRMAGR) is disordered.

Belongs to the universal ribosomal protein uL3 family. Part of the 50S ribosomal subunit. Forms a cluster with proteins L14 and L19.

In terms of biological role, one of the primary rRNA binding proteins, it binds directly near the 3'-end of the 23S rRNA, where it nucleates assembly of the 50S subunit. The polypeptide is Large ribosomal subunit protein uL3 (Chlorobium limicola (strain DSM 245 / NBRC 103803 / 6330)).